The following is a 298-amino-acid chain: HTH-type transcriptional regulator ArgP (298 aa).

Positions 4-60 (VDYRWVAALDAVIAQRGFERAAEKLCITQSAVSQRIKQLEKLMAQPLLVREQPPRPT) constitute an HTH lysR-type domain. Positions 21 to 40 (FERAAEKLCITQSAVSQRIK) form a DNA-binding region, H-T-H motif.

The protein belongs to the LysR transcriptional regulatory family. Homodimer.

Functionally, controls the transcription of genes involved in arginine and lysine metabolism. The sequence is that of HTH-type transcriptional regulator ArgP from Photobacterium profundum (strain SS9).